The chain runs to 83 residues: DNA-directed RNA polymerase subunit omega (83 aa).

Belongs to the RNA polymerase subunit omega family. As to quaternary structure, the RNAP catalytic core consists of 2 alpha, 1 beta, 1 beta' and 1 omega subunit. When a sigma factor is associated with the core the holoenzyme is formed, which can initiate transcription.

It catalyses the reaction RNA(n) + a ribonucleoside 5'-triphosphate = RNA(n+1) + diphosphate. Promotes RNA polymerase assembly. Latches the N- and C-terminal regions of the beta' subunit thereby facilitating its interaction with the beta and alpha subunits. This is DNA-directed RNA polymerase subunit omega from Chromohalobacter salexigens (strain ATCC BAA-138 / DSM 3043 / CIP 106854 / NCIMB 13768 / 1H11).